Reading from the N-terminus, the 438-residue chain is Battenin (438 aa).

The disordered stretch occupies residues Met1–Arg27. Residues Met1–Asn37 are Cytoplasmic-facing. Ser14 carries the post-translational modification Phosphoserine. A helical transmembrane segment spans residues Ala38 to Ala58. Residues Ala59–Arg127 lie on the Lumenal side of the membrane. Positions Gln67–Ser87 are disordered. N-linked (GlcNAc...) asparagine glycosylation is found at Asn71 and Asn85. The chain crosses the membrane as a helical span at residues Val128–Val148. Residues Gly149–Ser151 lie on the Cytoplasmic side of the membrane. Residues Leu152–Leu172 traverse the membrane as a helical segment. At Thr173 to Ser182 the chain is on the lumenal side. A helical transmembrane segment spans residues Trp183 to Thr203. The Cytoplasmic portion of the chain corresponds to Gln204–Val277. Positions Pro239–Ser261 are disordered. The Lysosomal targeting motif motif lies at Glu242 to Glu244. The Lysosomal targeting motif. Required for AP1G1, AP2A2 and AP3D1 interaction signature appears at Leu253–Ile254. Residues Phe278–Ile298 form a helical membrane-spanning segment. Topologically, residues Asn299–Trp346 are lumenal. Asn310 carries an N-linked (GlcNAc...) asparagine glycan. The helical transmembrane segment at Val347 to Phe367 threads the bilayer. Topologically, residues Leu368 to Pro438 are cytoplasmic. The short motif at Met409–Gly419 is the Lysosomal targeting motif element. Residue Cys435 is modified to Cysteine methyl ester. Cys435 is lipidated: S-farnesyl cysteine. The propeptide at His436–Pro438 is removed in mature form.

The protein belongs to the battenin family. In terms of assembly, homooligomer. Interacts with DCTN1, KIF3A, RAB7A and RILP. Interacts with CLN5. Interacts with KCNIP3. Post-translationally, highly glycosylated. In terms of processing, farnesylation is important for trafficking to lysosomes. Expressed throughout the brain, such as, in the cerebral cortex, hippocampus, cerebellum and several different cerebral nuclei (at protein level). In the cerebral cortex, expressed in all cortical layers. In the hippocampus, expressed in the granule cells in the dentate gyrus and the pyramidal cells of the hippocampus proper. In the cerebellum expressed in the granular and molecular layers, and in the Purkinje cell layer.

Its subcellular location is the lysosome membrane. The protein resides in the late endosome. It localises to the lysosome. It is found in the membrane raft. The protein localises to the golgi apparatus. Its subcellular location is the trans-Golgi network. The protein resides in the synapse. It localises to the synaptosome. It is found in the early endosome membrane. The protein localises to the late endosome membrane. Its subcellular location is the cytoplasmic vesicle. The protein resides in the autophagosome. Functionally, mediates microtubule-dependent, anterograde transport connecting the Golgi network, endosomes, autophagosomes, lysosomes and plasma membrane, and participates in several cellular processes such as regulation of lysosomal pH, lysosome protein degradation, receptor-mediated endocytosis, autophagy, transport of proteins and lipids from the TGN, apoptosis and synaptic transmission. Facilitates the proteins transport from trans-Golgi network (TGN)-to other membrane compartments such as transport of microdomain-associated proteins to the plasma membrane, IGF2R transport to the lysosome where it regulates the CTSD release leading to regulation of CTSD maturation and thereby APP intracellular processing. Moreover regulates CTSD activity in response to osmotic stress. Also binds galactosylceramide and transports it from the trans Golgi to the rafts, which may have immediate and downstream effects on cell survival by modulating ceramide synthesis. At the plasma membrane, regulates actin-dependent events including filopodia formation, cell migration, and pinocytosis through ARF1-CDC42 pathway and also the cytoskeleton organization through interaction with MYH10 and fodrin leading to the regulation of the plasma membrane association of Na+, K+ ATPase complex. Regulates synaptic transmission in the amygdala, hippocampus, and cerebellum through regulation of synaptic vesicles density and their proximity to active zones leading to modulation of short-term plasticity and age-dependent anxious behavior, learning and memory. Regulates autophagic vacuoles (AVs) maturation by modulating the trafficking between endocytic and autophagolysosomal/lysosomal compartments, which involves vesicle fusion leading to regulation of degradation process. Also participates in cellular homeostasis of compounds such as, water, ions, amino acids, proteins and lipids in several tissue namely in brain and kidney through regulation of their transport and synthesis. The polypeptide is Battenin (Mus musculus (Mouse)).